The following is a 143-amino-acid chain: AP-2 complex subunit sigma (143 aa).

It belongs to the adaptor complexes small subunit family. As to quaternary structure, adaptor protein complex 2 (AP-2) is a heterotetramer composed of two large adaptins (alpha-type subunit APL3 and beta-type subunit APL1), a medium chain (mu-type subunit APM4) and a small adaptin (sigma-type subunit APS2).

It is found in the cell membrane. The protein localises to the membrane. The protein resides in the coated pit. In terms of biological role, component of the adaptor complexes which link clathrin to receptors in coated vesicles. Clathrin-associated protein complexes are believed to interact with the cytoplasmic tails of membrane proteins, leading to their selection and concentration. The chain is AP-2 complex subunit sigma (APS2) from Gibberella zeae (strain ATCC MYA-4620 / CBS 123657 / FGSC 9075 / NRRL 31084 / PH-1) (Wheat head blight fungus).